The primary structure comprises 33 residues: Brevinin-2E (33 aa).

Cys27 and Cys33 are oxidised to a cystine.

Belongs to the frog skin active peptide (FSAP) family. Brevinin subfamily. In terms of tissue distribution, expressed by the skin glands.

The protein resides in the secreted. Its function is as follows. Shows antibacterial activity against representative Gram-negative and Gram-positive bacterial species, and hemolytic activity. This chain is Brevinin-2E, found in Pelophylax lessonae (Pool frog).